Consider the following 32-residue polypeptide: MSDIN-like toxin proprotein 2 (32 aa).

Residues 1-10 constitute a propeptide that is removed on maturation; the sequence is MSDINATRVP. Positions 11–17 form a cross-link, cyclopeptide (Ala-Pro); it reads AWLAECP. A propeptide spanning residues 18 to 32 is cleaved from the precursor; it reads CVGDDISHLLTRGEK.

Belongs to the MSDIN fungal toxin family. In terms of processing, processed by the macrocyclase-peptidase enzyme POPB to yield a toxic cyclic heptapeptide. POPB first removes 10 residues from the N-terminus. Conformational trapping of the remaining peptide forces the enzyme to release this intermediate rather than proceed to macrocyclization. The enzyme rebinds the remaining peptide in a different conformation and catalyzes macrocyclization of the N-terminal 7 residues.

Its function is as follows. Probable toxin that belongs to the MSDIN-like toxin family responsible for a large number of food poisoning cases and deaths. The protein is MSDIN-like toxin proprotein 2 of Amanita rimosa.